The following is a 966-amino-acid chain: SYGYDEKSAGGISVPGPMGPSGPRGLPGPPGPGPQGFQGPPGEPGEPGSGPMGPRGPPGPPGKNGDDGEAGKPGRPGERGPPGPQGARGLPGTAGLPGMKGHRGFSGLDGAKGDAGPAGPKGEPGSPGENGAPGQMGPRGLPGERGRPGASGPAGARGNDGATGAAGPPGPTGPAGPPGFPGAVGAKGEAGPQGARGSEGPQGVRGEPGPPGPAGAAGPAGNPGADGQPGAKGANGAPGIAGAPGFPGARGPSGPQGPSGPPGPKGNSGEPGAPGNKGDTGAKGEPGPTGIQGPPGPAGEEGKRGARGEPGPTGLPGPPGERGGPGSRGFPGADGVAGPKGPAGERGSPGPAGPKGSPGEAGRPGEAGLPGAKGLTGSPGSPGPDGKTGPPGPAGQDGRPGPPGPPGARGQAGVMGFPGPKGAAGEPGKAGERGVPGPPGAVGPAGKDGEAGAQGPPGPAGPAGERGEQGPAGSPGFQGLPGPAGPPGEAGKPGEQGVPGDLGAPGPSGARGERGFPGERGVQGPPGPAGPRGSNGAPGGAPGSQGAPGLQGMPGERGAAGLPGPKGDRGDAGPKGTDGAPGKDGVRGLTGPIGPPGPAGAPGDKGESGPSGPAGPTGARGAPGDRGEPGPPGPAGFAGPPGADGQPGAKGEPGDAGAKGDAGPPGPAGPTGPPGPIGNVGAPGPKGARGSAGPPGATGFPGAAGRVGPPGPSGNAGPPGPPGPVGKEGGKGPRGETGPAGEKGSPGADGPAGAPGTPGPQGISGQRGVVGLPGQRGERGFPGLPGPSGEPGKQGPSGSSGERGPPGPVGPPGLAGPPGESGREGPGAEGSPGRGKNGDRGETGPAGPAGPAGPAGARGPAGPQGPRGDKGETGEQGDRGIKGHRGFSGLQGPAGPPGSPGEQGPSGASGPAGPRGPPGSAGSPGKDGLNGLPGPIGPPGPRGRTGDAGPVGPPGPPGPPGPPGPP.

The tract at residues 1 to 966 is disordered; sequence SYGYDEKSAG…PGPPGPPGPP (966 aa). Lysine 7 bears the Allysine mark. At serine 8 the chain carries Phosphoserine. 11 positions are modified to 4-hydroxyproline: proline 27, proline 30, proline 32, proline 41, proline 44, proline 47, proline 61, proline 76, proline 82, proline 91, and proline 97. The span at 64-78 shows a compositional bias: basic and acidic residues; that stretch reads NGDDGEAGKPGRPGE. A 5-hydroxylysine; alternate modification is found at lysine 100. Lysine 100 is a glycosylation site (O-linked (Gal...) hydroxylysine; alternate). Serine 106 carries the phosphoserine modification. Residues 114-130 are compositionally biased toward low complexity; sequence DAGPAGPKGEPGSPGEN. 4-hydroxyproline is present on residues proline 124, proline 127, proline 133, proline 142, proline 148, proline 169, proline 178, proline 181, proline 208, proline 211, proline 223, proline 229, proline 238, proline 244, proline 247, and proline 262. The segment covering 148 to 166 has biased composition (low complexity); sequence PGASGPAGARGNDGATGAA. Residues 168–180 show a composition bias toward pro residues; it reads PPGPTGPAGPPGF. Positions 214–253 are enriched in low complexity; sequence AGAAGPAGNPGADGQPGAKGANGAPGIAGAPGFPGARGPS. A 5-hydroxylysine modification is found at lysine 265. A 4-hydroxyproline mark is found at proline 271, proline 274, proline 286, proline 295, proline 310, proline 316, proline 325, and proline 331. The segment covering 320-329 has biased composition (gly residues); it reads GERGGPGSRG. The residue at position 340 (lysine 340) is a 5-hydroxylysine. A 4-hydroxyproline mark is found at proline 349, proline 358, proline 364, proline 370, proline 379, proline 382, proline 391, proline 400, proline 406, proline 418, proline 427, proline 436, proline 439, proline 457, proline 475, proline 481, proline 487, proline 493, proline 499, proline 505, proline 517, proline 526, proline 538, proline 542, proline 548, proline 554, and proline 563. Over residues 373 to 399 the composition is skewed to low complexity; that stretch reads KGLTGSPGSPGPDGKTGPPGPAGQDGR. A compositionally biased stretch (low complexity) spans 408 to 427; sequence ARGQAGVMGFPGPKGAAGEP. Positions 469-496 are enriched in low complexity; the sequence is QGPAGSPGFQGLPGPAGPPGEAGKPGEQ. Lysine 575 carries the post-translational modification 5-hydroxylysine. 4-hydroxyproline is present on residues proline 581, proline 596, and proline 602. Low complexity predominate over residues 608–622; it reads SGPSGPAGPTGARGA. Residue serine 611 is modified to Phosphoserine. Residues proline 623, proline 629, proline 632, proline 641, proline 647, proline 665, proline 674, and proline 683 each carry the 4-hydroxyproline modification. Residues 635–662 show a composition bias toward low complexity; that stretch reads AGFAGPPGADGQPGAKGEPGDAGAKGDA. The segment covering 664–676 has biased composition (pro residues); the sequence is PPGPAGPTGPPGP. The residue at position 686 (lysine 686) is a 5-hydroxylysine. A compositionally biased stretch (low complexity) spans 691 to 707; sequence SAGPPGATGFPGAAGRV. 4-hydroxyproline occurs at positions 695 and 701. Residue proline 709 is modified to 3-hydroxyproline. A 4-hydroxyproline mark is found at proline 710, proline 719, proline 722, proline 746, proline 755, proline 773, proline 782, proline 785, proline 791, proline 806, proline 812, proline 818, proline 826, and proline 832. The span at 736–755 shows a compositional bias: low complexity; it reads ETGPAGEKGSPGADGPAGAP. Residues 805 to 815 show a composition bias toward pro residues; sequence PPGPVGPPGLA. Gly residues predominate over residues 824-835; sequence EGPGAEGSPGRG. Residues 852–866 are compositionally biased toward low complexity; the sequence is AGPAGARGPAGPQGP. The span at 867–881 shows a compositional bias: basic and acidic residues; the sequence is RGDKGETGEQGDRGI. Lysine 870 is modified (5-hydroxylysine). Lysine 882 carries the post-translational modification 5-hydroxylysine; alternate. Lysine 882 is a glycosylation site (O-linked (Gal...) hydroxylysine; alternate). Proline 897, proline 900, proline 918, and proline 933 each carry 4-hydroxyproline. Over residues 900–933 the composition is skewed to low complexity; sequence PGEQGPSGASGPAGPRGPPGSAGSPGKDGLNGLP. Residue proline 938 is modified to 3-hydroxyproline. A 4-hydroxyproline modification is found at proline 939. The span at 951 to 966 shows a compositional bias: pro residues; the sequence is VGPPGPPGPPGPPGPP. At proline 953 the chain carries 3-hydroxyproline. Residue proline 954 is modified to 4-hydroxyproline. Position 956 is a 3-hydroxyproline (proline 956). At proline 957 the chain carries 4-hydroxyproline. 3-hydroxyproline is present on proline 959. 3 positions are modified to 4-hydroxyproline: proline 960, proline 963, and proline 966.

The protein belongs to the fibrillar collagen family. In terms of assembly, trimers of one alpha 2(I) and two alpha 1(I) chains. Contains mostly 4-hydroxyproline. Proline residues at the third position of the tripeptide repeating unit (G-X-Y) are hydroxylated in some or all of the chains. In terms of processing, contains 3-hydroxyproline at a few sites. This modification occurs on the first proline residue in the sequence motif Gly-Pro-Hyp, where Hyp is 4-hydroxyproline. Post-translationally, lysine residues at the third position of the tripeptide repeating unit (G-X-Y) are 5-hydroxylated in some or all of the chains. O-glycosylated on hydroxylated lysine residues. The O-linked glycan consists of a Glc-Gal disaccharide. Expressed in bones.

It localises to the secreted. The protein localises to the extracellular space. Its subcellular location is the extracellular matrix. Type I collagen is a member of group I collagen (fibrillar forming collagen). This chain is Collagen alpha-1(I) chain, found in Bradypus variegatus (Brown-throated three-fingered sloth).